The sequence spans 130 residues: Flagellar assembly factor FliW (130 aa).

The protein belongs to the FliW family. As to quaternary structure, interacts with translational regulator CsrA and flagellin(s).

It localises to the cytoplasm. Acts as an anti-CsrA protein, binds CsrA and prevents it from repressing translation of its target genes, one of which is flagellin. Binds to flagellin and participates in the assembly of the flagellum. This chain is Flagellar assembly factor FliW, found in Borrelia hermsii (strain HS1 / DAH).